The following is a 1095-amino-acid chain: DNA-directed RNA polymerase subunit beta (1095 aa).

A disordered region spans residues 1069–1095; sequence DLMQDVNPRRSTPSRPTYESLGKEYEE.

Belongs to the RNA polymerase beta chain family. In terms of assembly, in cyanobacteria the RNAP catalytic core is composed of 2 alpha, 1 beta, 1 beta', 1 gamma and 1 omega subunit. When a sigma factor is associated with the core the holoenzyme is formed, which can initiate transcription.

It carries out the reaction RNA(n) + a ribonucleoside 5'-triphosphate = RNA(n+1) + diphosphate. Functionally, DNA-dependent RNA polymerase catalyzes the transcription of DNA into RNA using the four ribonucleoside triphosphates as substrates. The polypeptide is DNA-directed RNA polymerase subunit beta (Prochlorococcus marinus (strain NATL2A)).